A 281-amino-acid chain; its full sequence is Probable protein phosphatase 2C 9 (281 aa).

The region spanning 33-280 (KYGFSLVKGK…DDISCVVVRF (248 aa)) is the PPM-type phosphatase domain. 4 residues coordinate Mn(2+): Asp70, Gly71, Asp232, and Asp271.

This sequence belongs to the PP2C family. In terms of assembly, interacts with phytochromes (via N-terminus). Requires Mg(2+) as cofactor. The cofactor is Mn(2+).

Its subcellular location is the nucleus. It catalyses the reaction O-phospho-L-seryl-[protein] + H2O = L-seryl-[protein] + phosphate. The enzyme catalyses O-phospho-L-threonyl-[protein] + H2O = L-threonyl-[protein] + phosphate. Involved in the regulation of phytochrome signaling. May regulate phytochrome-interacting factor 3 (PIF3) through the dephosphorylation of phytochrome. The chain is Probable protein phosphatase 2C 9 from Arabidopsis thaliana (Mouse-ear cress).